The following is a 246-amino-acid chain: 4-hydroxy-tetrahydrodipicolinate reductase (246 aa).

NAD(+) contacts are provided by residues 7 to 12 (GATGRT), 84 to 86 (GTT), and 108 to 111 (ASNF). Residue histidine 140 is the Proton donor/acceptor of the active site. Position 141 (histidine 141) interacts with (S)-2,3,4,5-tetrahydrodipicolinate. Lysine 144 acts as the Proton donor in catalysis. (S)-2,3,4,5-tetrahydrodipicolinate is bound at residue 150–151 (GT).

Belongs to the DapB family.

It is found in the cytoplasm. It carries out the reaction (S)-2,3,4,5-tetrahydrodipicolinate + NAD(+) + H2O = (2S,4S)-4-hydroxy-2,3,4,5-tetrahydrodipicolinate + NADH + H(+). The enzyme catalyses (S)-2,3,4,5-tetrahydrodipicolinate + NADP(+) + H2O = (2S,4S)-4-hydroxy-2,3,4,5-tetrahydrodipicolinate + NADPH + H(+). It functions in the pathway amino-acid biosynthesis; L-lysine biosynthesis via DAP pathway; (S)-tetrahydrodipicolinate from L-aspartate: step 4/4. Its function is as follows. Catalyzes the conversion of 4-hydroxy-tetrahydrodipicolinate (HTPA) to tetrahydrodipicolinate. This chain is 4-hydroxy-tetrahydrodipicolinate reductase, found in Natronomonas pharaonis (strain ATCC 35678 / DSM 2160 / CIP 103997 / JCM 8858 / NBRC 14720 / NCIMB 2260 / Gabara) (Halobacterium pharaonis).